The primary structure comprises 170 residues: uncharacterized protein (170 aa).

The first 26 residues, 1–26 (MLKKKWMVGLLAGCLAAGGFSYNAFA), serve as a signal peptide directing secretion.

This is an uncharacterized protein from Bacillus subtilis (strain 168).